The following is a 551-amino-acid chain: Dihydroxy-acid dehydratase (551 aa).

Mg(2+) is bound at residue Asp-78. A [2Fe-2S] cluster-binding site is contributed by Cys-119. Asp-120 and Lys-121 together coordinate Mg(2+). Lys-121 carries the post-translational modification N6-carboxylysine. Cys-191 is a [2Fe-2S] cluster binding site. Glu-442 contributes to the Mg(2+) binding site. Ser-468 acts as the Proton acceptor in catalysis.

Belongs to the IlvD/Edd family. Homodimer. Requires [2Fe-2S] cluster as cofactor. Mg(2+) is required as a cofactor.

The catalysed reaction is (2R)-2,3-dihydroxy-3-methylbutanoate = 3-methyl-2-oxobutanoate + H2O. It carries out the reaction (2R,3R)-2,3-dihydroxy-3-methylpentanoate = (S)-3-methyl-2-oxopentanoate + H2O. The protein operates within amino-acid biosynthesis; L-isoleucine biosynthesis; L-isoleucine from 2-oxobutanoate: step 3/4. Its pathway is amino-acid biosynthesis; L-valine biosynthesis; L-valine from pyruvate: step 3/4. Functionally, functions in the biosynthesis of branched-chain amino acids. Catalyzes the dehydration of (2R,3R)-2,3-dihydroxy-3-methylpentanoate (2,3-dihydroxy-3-methylvalerate) into 2-oxo-3-methylpentanoate (2-oxo-3-methylvalerate) and of (2R)-2,3-dihydroxy-3-methylbutanoate (2,3-dihydroxyisovalerate) into 2-oxo-3-methylbutanoate (2-oxoisovalerate), the penultimate precursor to L-isoleucine and L-valine, respectively. The protein is Dihydroxy-acid dehydratase of Halothermothrix orenii (strain H 168 / OCM 544 / DSM 9562).